Consider the following 66-residue polypeptide: Large ribosomal subunit protein uL29 (66 aa).

It belongs to the universal ribosomal protein uL29 family.

This is Large ribosomal subunit protein uL29 from Thermotoga neapolitana (strain ATCC 49049 / DSM 4359 / NBRC 107923 / NS-E).